Here is a 618-residue protein sequence, read N- to C-terminus: Leucine aminopeptidase 2 (618 aa).

Residues 139-141 (QCQ) and 271-276 (PYGGME) contribute to the a peptide site. A Zn(2+)-binding site is contributed by histidine 300. Glutamate 301 functions as the Proton acceptor in the catalytic mechanism. Zn(2+) contacts are provided by histidine 304 and glutamate 323. Tyrosine 389 acts as the Proton donor in catalysis.

It belongs to the peptidase M1 family. It depends on Zn(2+) as a cofactor.

The protein localises to the cytoplasm. It localises to the nucleus. It carries out the reaction an epoxide + H2O = an ethanediol. Aminopeptidase that preferentially cleaves di- and tripeptides. Also has low epoxide hydrolase activity (in vitro). Can hydrolyze the epoxide leukotriene LTA(4) but it forms preferentially 5,6-dihydroxy-7,9,11,14-eicosatetraenoic acid rather than the cytokine leukotriene B(4) as the product compared to the homologous mammalian enzyme (in vitro). In Aspergillus clavatus (strain ATCC 1007 / CBS 513.65 / DSM 816 / NCTC 3887 / NRRL 1 / QM 1276 / 107), this protein is Leucine aminopeptidase 2.